The sequence spans 386 residues: Cytochrome b (386 aa).

The next 4 helical transmembrane spans lie at Phe-32–Met-52, Trp-76–Gly-98, Thr-113–Val-133, and Phe-179–Ile-199. Heme b-binding residues include His-82 and His-96. Positions 183 and 197 each coordinate heme b. His-202 is a binding site for a ubiquinone. 4 consecutive transmembrane segments (helical) span residues Phe-226 to Leu-246, Thr-290 to Asp-310, Leu-322 to Ala-342, and Phe-349 to Pro-369.

It belongs to the cytochrome b family. As to quaternary structure, fungal cytochrome b-c1 complex contains 10 subunits; 3 respiratory subunits, 2 core proteins and 5 low-molecular weight proteins. Cytochrome b-c1 complex is a homodimer. Heme b is required as a cofactor.

The protein resides in the mitochondrion inner membrane. Component of the ubiquinol-cytochrome c reductase complex (complex III or cytochrome b-c1 complex) that is part of the mitochondrial respiratory chain. The b-c1 complex mediates electron transfer from ubiquinol to cytochrome c. Contributes to the generation of a proton gradient across the mitochondrial membrane that is then used for ATP synthesis. The chain is Cytochrome b (COB) from Trichophyton rubrum (Athlete's foot fungus).